Here is a 225-residue protein sequence, read N- to C-terminus: F-box protein SKIP27 (225 aa).

Residues 121-169 enclose the F-box domain; the sequence is KSRLECLPQDLLIRVICGVDHEDLKSLKLVSKSIREASLVAKTLHFAYT.

Part of a SCF (ASK-cullin-F-box) protein ligase complex. Interacts with SKP1A/ASK1 and SPK1B/ASK2.

It is found in the nucleus. Its pathway is protein modification; protein ubiquitination. Its function is as follows. Component of SCF(ASK-cullin-F-box) E3 ubiquitin ligase complexes, which may mediate the ubiquitination and subsequent proteasomal degradation of target proteins. The chain is F-box protein SKIP27 (SKIP27) from Arabidopsis thaliana (Mouse-ear cress).